Reading from the N-terminus, the 347-residue chain is Transcription factor EC (347 aa).

A necessary for transcriptional transactivation region spans residues 1-119 (MTLDHQIINP…GLTSASCPSS (119 aa)). A bHLH domain is found at 139 to 192 (QKKDNHNLIERRRRYNINYRIKELGTLIPKSNDPDMRWNKGTILKASVEYIKWL). The segment at 271-347 (PSPEFCDQAI…SFSSDDGDEL (77 aa)) is necessary for transcriptional transactivation. Residues 319–347 (DPLLSATSPAVSKESSRRSSFSSDDGDEL) form a disordered region. Residues 326 to 341 (SPAVSKESSRRSSFSS) show a composition bias toward low complexity.

It belongs to the MiT/TFE family. As to quaternary structure, homodimer. Forms heterodimers with MITF and TFE3. Interacts with MITF.

It localises to the nucleus. Transcriptional regulator that acts as a repressor or an activator. Acts as a transcriptional repressor on minimal promoter containing element F (that includes an E-box sequence). Binds to element F in an E-box sequence-specific manner. Acts as a transcriptional transactivator on the proximal promoter region of the tartrate-resistant acid phosphatase (TRAP) E-box containing promoter. Collaborates with MITF in target gene activation. Acts as a transcriptional repressor on minimal promoter containing mu E3 enhancer sequence. Binds to mu E3 DNA sequence of the immunoglobulin heavy-chain gene enhancer. Binds DNA in a homo- or heterodimeric form. The protein is Transcription factor EC (TFEC) of Pan troglodytes (Chimpanzee).